The primary structure comprises 117 residues: Minor capsid protein p17 (117 aa).

N12 carries N-linked (GlcNAc...) asparagine; by host glycosylation. Residues 39–59 (AIILGILILLVIILIVVAIVY) form a helical membrane-spanning segment. 2 N-linked (GlcNAc...) asparagine; by host glycosylation sites follow: N61 and N98. The interval 97–117 (KNSTTQQHIPSDEQLAELAHS) is disordered.

The protein belongs to the asfivirus minor capsid protein p17 family. As to quaternary structure, interacts with the minor capsid protein M1249L and with the hexon capsid protein p72 capsomers; these interactions form a rigid zipper structure that stabilizes the capsomers. Interacts with host STING1.

It localises to the virion membrane. The protein localises to the host endoplasmic reticulum membrane. In terms of biological role, together with the penton and the other minor capsid proteins (M1249L, p49), forms a complicated network immediately below the outer capsid shell, stabilizing the whole capsid. Three copies of p17 encircle each p72 capsomer in the inner capsid shell, anchoring p72 capsomers on the inner membrane. Required for the assembly of the capsid and icosahedral morphogenesis. Additionally, inhibits the host cGAS-STING pathway through its interaction with STING1 and subsequent interference of the recruitment of downstream components TBK1 and IKBKE. This Ornithodoros (relapsing fever ticks) protein is Minor capsid protein p17.